A 137-amino-acid polypeptide reads, in one-letter code: Small ribosomal subunit protein uS9c (137 aa).

The tract at residues 106-137 is disordered; sequence KSEGYLTRDPRVKERKKYGLKKARKAPQFSKR. Over residues 118–137 the composition is skewed to basic residues; it reads KERKKYGLKKARKAPQFSKR.

It belongs to the universal ribosomal protein uS9 family.

The protein localises to the plastid. It localises to the chloroplast. The chain is Small ribosomal subunit protein uS9c (rps9) from Pyropia yezoensis (Susabi-nori).